The following is a 299-amino-acid chain: Diaminopimelate epimerase (299 aa).

Substrate contacts are provided by Asn-13, Gln-46, and Asn-66. The Proton donor role is filled by Cys-75. Substrate is bound by residues 76-77, Asn-166, Asn-199, and 217-218; these read GN and ER. The Proton acceptor role is filled by Cys-226. Residue 227-228 coordinates substrate; that stretch reads GT.

Belongs to the diaminopimelate epimerase family. Homodimer.

The protein localises to the cytoplasm. It catalyses the reaction (2S,6S)-2,6-diaminopimelate = meso-2,6-diaminopimelate. The protein operates within amino-acid biosynthesis; L-lysine biosynthesis via DAP pathway; DL-2,6-diaminopimelate from LL-2,6-diaminopimelate: step 1/1. Its function is as follows. Catalyzes the stereoinversion of LL-2,6-diaminopimelate (L,L-DAP) to meso-diaminopimelate (meso-DAP), a precursor of L-lysine and an essential component of the bacterial peptidoglycan. The sequence is that of Diaminopimelate epimerase from Paraburkholderia phytofirmans (strain DSM 17436 / LMG 22146 / PsJN) (Burkholderia phytofirmans).